The primary structure comprises 558 residues: Dihydroxy-acid dehydratase (558 aa).

Cysteine 48 provides a ligand contact to [2Fe-2S] cluster. Residue aspartate 80 coordinates Mg(2+). A [2Fe-2S] cluster-binding site is contributed by cysteine 121. 2 residues coordinate Mg(2+): aspartate 122 and lysine 123. At lysine 123 the chain carries N6-carboxylysine. A [2Fe-2S] cluster-binding site is contributed by cysteine 193. Glutamate 445 contributes to the Mg(2+) binding site. The active-site Proton acceptor is serine 471.

This sequence belongs to the IlvD/Edd family. In terms of assembly, homodimer. The cofactor is [2Fe-2S] cluster. Requires Mg(2+) as cofactor.

The enzyme catalyses (2R)-2,3-dihydroxy-3-methylbutanoate = 3-methyl-2-oxobutanoate + H2O. The catalysed reaction is (2R,3R)-2,3-dihydroxy-3-methylpentanoate = (S)-3-methyl-2-oxopentanoate + H2O. It functions in the pathway amino-acid biosynthesis; L-isoleucine biosynthesis; L-isoleucine from 2-oxobutanoate: step 3/4. Its pathway is amino-acid biosynthesis; L-valine biosynthesis; L-valine from pyruvate: step 3/4. In terms of biological role, functions in the biosynthesis of branched-chain amino acids. Catalyzes the dehydration of (2R,3R)-2,3-dihydroxy-3-methylpentanoate (2,3-dihydroxy-3-methylvalerate) into 2-oxo-3-methylpentanoate (2-oxo-3-methylvalerate) and of (2R)-2,3-dihydroxy-3-methylbutanoate (2,3-dihydroxyisovalerate) into 2-oxo-3-methylbutanoate (2-oxoisovalerate), the penultimate precursor to L-isoleucine and L-valine, respectively. The protein is Dihydroxy-acid dehydratase of Prochlorococcus marinus (strain SARG / CCMP1375 / SS120).